Here is a 192-residue protein sequence, read N- to C-terminus: dTTP/UTP pyrophosphatase (192 aa).

D71 functions as the Proton acceptor in the catalytic mechanism.

This sequence belongs to the Maf family. YhdE subfamily. It depends on a divalent metal cation as a cofactor.

Its subcellular location is the cytoplasm. It carries out the reaction dTTP + H2O = dTMP + diphosphate + H(+). The enzyme catalyses UTP + H2O = UMP + diphosphate + H(+). In terms of biological role, nucleoside triphosphate pyrophosphatase that hydrolyzes dTTP and UTP. May have a dual role in cell division arrest and in preventing the incorporation of modified nucleotides into cellular nucleic acids. The sequence is that of dTTP/UTP pyrophosphatase from Clostridium tetani (strain Massachusetts / E88).